The primary structure comprises 273 residues: MNRQSVLRLARQTGAFPLAELPPPYLAPSLHFSMNRSTVQCSNFSSTAAVAAGRGDLNKVRGVSAIHRTGPKYKLGVSKYPLPKPVSPDALPKRNATPDHGLWGFFPTDRTALSTPTYDIECGRSWSIQELREKSWDDLHSLWWVCVKERNRIATSDMERKRLKAGYGEWESSERDRVIRVTQNGIKHVLRERWYAWEEAQRLYRKGYRPQEDSQEAIWEMRADSVSNSQGAGQLLVVSKAEDMIDPLRHDRWEKGQEENSGGETEDGNAPSN.

A compositionally biased stretch (basic and acidic residues) spans 247 to 258 (PLRHDRWEKGQE). Positions 247–273 (PLRHDRWEKGQEENSGGETEDGNAPSN) are disordered.

It belongs to the universal ribosomal protein uL29 family. As to quaternary structure, component of the mitochondrial large ribosomal subunit. Mature mitochondrial ribosomes consist of a small (37S) and a large (54S) subunit. The 37S subunit contains at least 33 different proteins and 1 molecule of RNA (15S). The 54S subunit contains at least 45 different proteins and 1 molecule of RNA (21S).

It is found in the mitochondrion. This Aspergillus niger (strain ATCC MYA-4892 / CBS 513.88 / FGSC A1513) protein is Large ribosomal subunit protein uL29m (mrpl4).